A 449-amino-acid chain; its full sequence is Exodeoxyribonuclease 7 large subunit (449 aa).

This sequence belongs to the XseA family. As to quaternary structure, heterooligomer composed of large and small subunits.

Its subcellular location is the cytoplasm. It catalyses the reaction Exonucleolytic cleavage in either 5'- to 3'- or 3'- to 5'-direction to yield nucleoside 5'-phosphates.. In terms of biological role, bidirectionally degrades single-stranded DNA into large acid-insoluble oligonucleotides, which are then degraded further into small acid-soluble oligonucleotides. This is Exodeoxyribonuclease 7 large subunit from Salmonella heidelberg (strain SL476).